The following is a 589-amino-acid chain: Carbonic anhydrase (589 aa).

Alpha-carbonic anhydrase domains lie at 59 to 316 and 321 to 585; these read HDYN…YEYK and DKYN…YGYN. Substrate is bound at residue 258 to 259; that stretch reads TT. The catalytic stretch occupies residues 390 to 589; it reads MQINFGDPPA…TVYGYNGAAA (200 aa). Residues histidine 420, histidine 422, and histidine 440 each coordinate Zn(2+).

This sequence belongs to the alpha-carbonic anhydrase family. Requires Zn(2+) as cofactor.

The catalysed reaction is hydrogencarbonate + H(+) = CO2 + H2O. Its function is as follows. Reversible hydration of carbon dioxide. The polypeptide is Carbonic anhydrase (DCA) (Dunaliella salina (Green alga)).